We begin with the raw amino-acid sequence, 415 residues long: Acetylornithine aminotransferase (415 aa).

Residues 115-116 (GA) and phenylalanine 148 contribute to the pyridoxal 5'-phosphate site. N(2)-acetyl-L-ornithine is bound at residue arginine 151. 239–242 (DEVQ) lines the pyridoxal 5'-phosphate pocket. Lysine 268 carries the post-translational modification N6-(pyridoxal phosphate)lysine. Serine 295 lines the N(2)-acetyl-L-ornithine pocket. Threonine 296 contributes to the pyridoxal 5'-phosphate binding site.

This sequence belongs to the class-III pyridoxal-phosphate-dependent aminotransferase family. ArgD subfamily. In terms of assembly, homodimer. Requires pyridoxal 5'-phosphate as cofactor.

Its subcellular location is the cytoplasm. It carries out the reaction N(2)-acetyl-L-ornithine + 2-oxoglutarate = N-acetyl-L-glutamate 5-semialdehyde + L-glutamate. Its pathway is amino-acid biosynthesis; L-arginine biosynthesis; N(2)-acetyl-L-ornithine from L-glutamate: step 4/4. In Prochlorococcus marinus subsp. pastoris (strain CCMP1986 / NIES-2087 / MED4), this protein is Acetylornithine aminotransferase.